A 352-amino-acid chain; its full sequence is DNA integrity scanning protein DisA (352 aa).

The 141-residue stretch at 3–143 folds into the DAC domain; it reads PQELIEKIKL…NYKYVVNQVD (141 aa). ATP is bound by residues Gly71, Leu89, and 102–106; that span reads TRHRT.

The protein belongs to the DisA family. As to quaternary structure, homooctamer. Requires Mg(2+) as cofactor.

It carries out the reaction 2 ATP = 3',3'-c-di-AMP + 2 diphosphate. Functionally, participates in a DNA-damage check-point. DisA forms globular foci that rapidly scan along the chromosomes searching for lesions. Also has diadenylate cyclase activity, catalyzing the condensation of 2 ATP molecules into cyclic di-AMP (c-di-AMP). c-di-AMP likely acts as a signaling molecule that may couple DNA integrity with a cellular process. In Thermotoga petrophila (strain ATCC BAA-488 / DSM 13995 / JCM 10881 / RKU-1), this protein is DNA integrity scanning protein DisA.